We begin with the raw amino-acid sequence, 303 residues long: UDP-3-O-acyl-N-acetylglucosamine deacetylase (303 aa).

3 residues coordinate Zn(2+): H78, H237, and D241. H264 functions as the Proton donor in the catalytic mechanism.

It belongs to the LpxC family. The cofactor is Zn(2+).

The catalysed reaction is a UDP-3-O-[(3R)-3-hydroxyacyl]-N-acetyl-alpha-D-glucosamine + H2O = a UDP-3-O-[(3R)-3-hydroxyacyl]-alpha-D-glucosamine + acetate. It participates in glycolipid biosynthesis; lipid IV(A) biosynthesis; lipid IV(A) from (3R)-3-hydroxytetradecanoyl-[acyl-carrier-protein] and UDP-N-acetyl-alpha-D-glucosamine: step 2/6. Its function is as follows. Catalyzes the hydrolysis of UDP-3-O-myristoyl-N-acetylglucosamine to form UDP-3-O-myristoylglucosamine and acetate, the committed step in lipid A biosynthesis. In Cellvibrio japonicus (strain Ueda107) (Pseudomonas fluorescens subsp. cellulosa), this protein is UDP-3-O-acyl-N-acetylglucosamine deacetylase.